The sequence spans 210 residues: 2-Cys peroxiredoxin BAS1, chloroplastic (210 aa).

Residues 1 to 10 constitute a chloroplast transit peptide; the sequence is DARARSFVAR. Residues 18-177 enclose the Thioredoxin domain; it reads PLVGNKAPDF…TLRTLQALQY (160 aa). The Cysteine sulfenic acid (-SOH) intermediate role is filled by cysteine 64.

Belongs to the peroxiredoxin family. AhpC/Prx1 subfamily. As to quaternary structure, homodimer; disulfide-linked, upon oxidation. As to expression, expressed in leaf blade, sheath, basiplast, stem and green spike. Maximal expression in young developing shoots segments where cell division and elongation take place. Not expressed in roots.

It localises to the plastid. Its subcellular location is the chloroplast. The enzyme catalyses a hydroperoxide + [thioredoxin]-dithiol = an alcohol + [thioredoxin]-disulfide + H2O. In terms of biological role, thiol-specific peroxidase that catalyzes the reduction of hydrogen peroxide and organic hydroperoxides to water and alcohols, respectively. Plays a role in cell protection against oxidative stress by detoxifying peroxides. May be an antioxidant enzyme particularly in the developing shoot and photosynthesizing leaf. The chain is 2-Cys peroxiredoxin BAS1, chloroplastic (BAS1) from Hordeum vulgare (Barley).